Here is a 209-residue protein sequence, read N- to C-terminus: MGQKVHPRGFRLGITADWQATWFNEKNYKEYLLEDEEIRKVIKNKYAQAGISEIVIERPDSERVIAIIKSARPGIIIGKKGAEITELRQELEKRFNRRFIVNVEEIKNPEVDAQLVAENIASRIEKRASYKVVMKKAIFNAMKKGAKGIKIMVSGRLAGAEIARTEWYLKGRLPLQTIKSIIDYGTARAETKYGTIGIKVWIYKGDADI.

One can recognise a KH type-2 domain in the interval 38–107 (IRKVIKNKYA…RFIVNVEEIK (70 aa)).

It belongs to the universal ribosomal protein uS3 family. Part of the 30S ribosomal subunit. Forms a tight complex with proteins S10 and S14.

Functionally, binds the lower part of the 30S subunit head. Binds mRNA in the 70S ribosome, positioning it for translation. The chain is Small ribosomal subunit protein uS3 from Thermosipho africanus (strain TCF52B).